A 570-amino-acid polypeptide reads, in one-letter code: Proline--tRNA ligase (570 aa).

This sequence belongs to the class-II aminoacyl-tRNA synthetase family. ProS type 1 subfamily. As to quaternary structure, homodimer.

The protein resides in the cytoplasm. The catalysed reaction is tRNA(Pro) + L-proline + ATP = L-prolyl-tRNA(Pro) + AMP + diphosphate. In terms of biological role, catalyzes the attachment of proline to tRNA(Pro) in a two-step reaction: proline is first activated by ATP to form Pro-AMP and then transferred to the acceptor end of tRNA(Pro). As ProRS can inadvertently accommodate and process non-cognate amino acids such as alanine and cysteine, to avoid such errors it has two additional distinct editing activities against alanine. One activity is designated as 'pretransfer' editing and involves the tRNA(Pro)-independent hydrolysis of activated Ala-AMP. The other activity is designated 'posttransfer' editing and involves deacylation of mischarged Ala-tRNA(Pro). The misacylated Cys-tRNA(Pro) is not edited by ProRS. The sequence is that of Proline--tRNA ligase from Shewanella oneidensis (strain ATCC 700550 / JCM 31522 / CIP 106686 / LMG 19005 / NCIMB 14063 / MR-1).